The following is a 135-amino-acid chain: Large ribosomal subunit protein uL16 (135 aa).

The protein belongs to the universal ribosomal protein uL16 family. In terms of assembly, part of the 50S ribosomal subunit.

Binds 23S rRNA and is also seen to make contacts with the A and possibly P site tRNAs. This is Large ribosomal subunit protein uL16 from Desulforapulum autotrophicum (strain ATCC 43914 / DSM 3382 / VKM B-1955 / HRM2) (Desulfobacterium autotrophicum).